A 270-amino-acid polypeptide reads, in one-letter code: Ethanolamine ammonia-lyase small subunit (270 aa).

Adenosylcob(III)alamin-binding residues include V161, E182, and C211.

It belongs to the EutC family. In terms of assembly, the basic unit is a heterodimer which dimerizes to form tetramers. The heterotetramers trimerize; 6 large subunits form a core ring with 6 small subunits projecting outwards. The cofactor is adenosylcob(III)alamin.

It localises to the bacterial microcompartment. It carries out the reaction ethanolamine = acetaldehyde + NH4(+). It functions in the pathway amine and polyamine degradation; ethanolamine degradation. Catalyzes the deamination of various vicinal amino-alcohols to oxo compounds. Allows this organism to utilize ethanolamine as the sole source of nitrogen and carbon in the presence of external vitamin B12. The polypeptide is Ethanolamine ammonia-lyase small subunit (Azotobacter vinelandii (strain DJ / ATCC BAA-1303)).